The sequence spans 464 residues: Glycine receptor subunit alpha-3 (464 aa).

Residues 1–33 form the signal peptide; that stretch reads MAHVRHFRTLLSGFYFWEAALLLSLVATKETNS. Topologically, residues 34-255 are extracellular; the sequence is ARSRSAPMSP…RFHLERQMGY (222 aa). Asn-71 carries an N-linked (GlcNAc...) asparagine glycan. The cysteines at positions 171 and 185 are disulfide-linked. Residues Glu-225 and Asp-227 each coordinate Zn(2+). Cys-231 and Cys-242 are joined by a disulfide. 235–240 provides a ligand contact to strychnine; it reads YNTGKF. His-248 serves as a coordination point for Zn(2+). A helical transmembrane segment spans residues 256 to 277; that stretch reads YLIQMYIPSLLIVILSWVSFWI. Over 278–282 the chain is Cytoplasmic; that stretch reads NMDAA. The helical transmembrane segment at 283-303 threads the bilayer; the sequence is PARVALGITTVLTMTTQSSGS. Residues 304-314 lie on the Extracellular side of the membrane; that stretch reads RASLPKVSYVK. A helical transmembrane segment spans residues 315 to 335; it reads AIDIWMAVCLLFVFSALLEYA. Topologically, residues 336 to 430 are cytoplasmic; sequence AVNFVSRQHK…FIDRAKKIDT (95 aa). Position 370 is a phosphoserine (Ser-370). Ser-379 carries the phosphoserine; by PKA modification. Residues 431-451 form a helical membrane-spanning segment; it reads ISRACFPLAFLIFNIFYWVIY. Residues 452 to 464 lie on the Extracellular side of the membrane; the sequence is KILRHEDIHHQQD.

The protein belongs to the ligand-gated ion channel (TC 1.A.9) family. Glycine receptor (TC 1.A.9.3) subfamily. GLRA3 sub-subfamily. Homopentamer (in vitro). Heteropentamer composed of GLRA3 and GLRB. Both homopentamers and heteropentamers form functional ion channels, but their characteristics are subtly different. Phosphorylated by PKA; this causes down-regulation of channel activity.

It is found in the postsynaptic cell membrane. It localises to the perikaryon. The protein resides in the cell projection. Its subcellular location is the dendrite. The protein localises to the synapse. It is found in the cell membrane. The catalysed reaction is chloride(in) = chloride(out). Low levels of Zn(2+) ions (1 uM) increase glycine sensitivity and decrease the glycine concentration required for half-maximal channel activity. Channel activity is strongly enhanced by ethanol. Inhibited by picrotoxin. Inhibited by prostaglandin E2, probably via PKA-mediated phosphorylation at Ser-379. Its function is as follows. Glycine receptors are ligand-gated chloride channels. Channel opening is triggered by extracellular glycine. Channel characteristics depend on the subunit composition; heteropentameric channels display faster channel closure. Plays an important role in the down-regulation of neuronal excitability. Contributes to the generation of inhibitory postsynaptic currents. Contributes to increased pain perception in response to increased prostaglandin E2 levels. Plays a role in cellular responses to ethanol. The chain is Glycine receptor subunit alpha-3 (Glra3) from Rattus norvegicus (Rat).